Reading from the N-terminus, the 134-residue chain is T-cell receptor alpha chain V region RL-5 (134 aa).

An N-terminal signal peptide occupies residues M1–T20. Residues N21–R114 form a v segment region. Residues R115 to N134 form a j segment region. N134 is a glycosylation site (N-linked (GlcNAc...) asparagine).

Rearrangement with the C region would elongate the sequence with Ile-Thr-; which creates a potential N-glycosylation site at Asn-134.

In Oryctolagus cuniculus (Rabbit), this protein is T-cell receptor alpha chain V region RL-5.